Reading from the N-terminus, the 318-residue chain is ADP-ribosyl cyclase/cyclic ADP-ribose hydrolase 2 (318 aa).

The first 32 residues, 1–32 (MAAQGCAASRLLQLLLQLLLLLLLLAAGGARA), serve as a signal peptide directing secretion. Disulfide bonds link C51–C67, C83–C163, and C144–C157. N66 and N95 each carry an N-linked (GlcNAc...) asparagine glycan. Residue W109 participates in NAD(+) binding. Position 109 (W109) interacts with nicotinamide. Residue N148 is glycosylated (N-linked (GlcNAc...) asparagine). Residue W172 coordinates NAD(+). Residue N192 is glycosylated (N-linked (GlcNAc...) asparagine). E210 is an NAD(+) binding site. 2 cysteine pairs are disulfide-bonded: C238–C259 and C271–C280. A293 carries GPI-anchor amidated alanine lipidation. Residues 294–318 (PSLYTEQRAGLIIPLFLVLASRTQL) constitute a propeptide, removed in mature form.

The protein belongs to the ADP-ribosyl cyclase family. As to quaternary structure, homodimer. Expressed in various tissues including placenta, lung, liver and kidney.

The protein resides in the cell membrane. The enzyme catalyses NAD(+) + H2O = ADP-D-ribose + nicotinamide + H(+). The catalysed reaction is NAD(+) = cyclic ADP-beta-D-ribose + nicotinamide + H(+). It catalyses the reaction cyclic ADP-beta-D-ribose + H2O = ADP-D-ribose. With respect to regulation, ADP-ribosyl cyclase and cADPR hydrolase activities are both activated by Zn(2+) or Mn(2+), and inhibited by Cu(2+), while Mg(2+) and Ca(2+) do not have any significant influence. Its function is as follows. Catalyzes both the synthesis of cyclic ADP-beta-D-ribose (cADPR) from NAD(+), and its hydrolysis to ADP-D-ribose (ADPR). Cyclic ADPR is known to serve as an endogenous second messenger that elicits calcium release from intracellular stores, and thus regulates the mobilization of intracellular calcium. May be involved in pre-B-cell growth. The sequence is that of ADP-ribosyl cyclase/cyclic ADP-ribose hydrolase 2 (BST1) from Homo sapiens (Human).